The primary structure comprises 560 residues: MKVWMAILISILCWQSSAWAVCPAWSPARAQEEISRLQQQIKQWDDDYWKEGKSEVEDGVYDQLSARLTQWQRCFGNETRDVMMPPLNGAVMHPVAHTGVRKMADKNALSLWMRERSDLWVQPKVDGVAVTLVYRDGKLNKAISRGNGLKGEDWTQKVRLISAVPQTVSGPLANSTLQGEIFLKRKGHIQQQMGGINARAKVAGLMMRQGNSDTLNSLAVFVWAWPDGPHLMTDRLKDLATAGFTLTQTYTRAVKNADEVAHVRNEWWKAKLPFVTDGVVVRAAKEPESRHWLPGQAEWLVAWKYQPVAQVAEVKAIQFAVGKSGKISVVASLAPVMLDDKKIQRVNIGSVRRWQEWDIAPGDQILVSLAGQGIPRIDDVVWRGAERTKPTPPENRFNSLTCYFASDVCQEQFISRLVWLGSKQVLGLDGIGEAGWRALHQTHRFEHIFSWLLLTPEQLQNTPGIAKSKSAQLWHQFNLARQQPFTRWVMAMGIPLTRAALNASDERSWSQLLFSKEQFWQQLPGTGSGRARQVIEWKENAQIKKLGSWLAAQQITGFEP.

Lys124 functions as the N6-AMP-lysine intermediate in the catalytic mechanism.

It belongs to the NAD-dependent DNA ligase family. LigB subfamily.

It carries out the reaction NAD(+) + (deoxyribonucleotide)n-3'-hydroxyl + 5'-phospho-(deoxyribonucleotide)m = (deoxyribonucleotide)n+m + AMP + beta-nicotinamide D-nucleotide.. Catalyzes the formation of phosphodiester linkages between 5'-phosphoryl and 3'-hydroxyl groups in double-stranded DNA using NAD as a coenzyme and as the energy source for the reaction. The chain is DNA ligase B from Escherichia coli O81 (strain ED1a).